The primary structure comprises 66 residues: KEGYPVNIYTGCKYSCWLLGENEYCIAECKEIGAGYGYCHGFGCWCEQFPENKPSYPYPEKSCGRK.

An LCN-type CS-alpha/beta domain is found at K1 to G64. 4 cysteine pairs are disulfide-bonded: C12-C63, C16-C39, C25-C44, and C29-C46. Position 63 is a cysteine amide (C63). Positions G64 to K66 are excised as a propeptide.

Belongs to the long (4 C-C) scorpion toxin superfamily. Sodium channel inhibitor family. Beta subfamily. As to expression, expressed by the venom gland.

It localises to the secreted. In terms of biological role, beta toxins bind voltage-independently at site-4 of sodium channels (Nav) and shift the voltage of activation toward more negative potentials thereby affecting sodium channel activation and promoting spontaneous and repetitive firing. This chain is Neurotoxin Cex11, found in Centruroides exilicauda (Bark scorpion).